Reading from the N-terminus, the 107-residue chain is Phosphoribosyl-ATP pyrophosphatase (107 aa).

The protein belongs to the PRA-PH family.

The protein localises to the cytoplasm. It carries out the reaction 1-(5-phospho-beta-D-ribosyl)-ATP + H2O = 1-(5-phospho-beta-D-ribosyl)-5'-AMP + diphosphate + H(+). Its pathway is amino-acid biosynthesis; L-histidine biosynthesis; L-histidine from 5-phospho-alpha-D-ribose 1-diphosphate: step 2/9. The polypeptide is Phosphoribosyl-ATP pyrophosphatase (Caulobacter sp. (strain K31)).